The following is a 287-amino-acid chain: Bifunctional protein FolD 2 (287 aa).

NADP(+) contacts are provided by residues 166-168 (GAS) and isoleucine 232.

It belongs to the tetrahydrofolate dehydrogenase/cyclohydrolase family. As to quaternary structure, homodimer.

The enzyme catalyses (6R)-5,10-methylene-5,6,7,8-tetrahydrofolate + NADP(+) = (6R)-5,10-methenyltetrahydrofolate + NADPH. It carries out the reaction (6R)-5,10-methenyltetrahydrofolate + H2O = (6R)-10-formyltetrahydrofolate + H(+). It participates in one-carbon metabolism; tetrahydrofolate interconversion. Its function is as follows. Catalyzes the oxidation of 5,10-methylenetetrahydrofolate to 5,10-methenyltetrahydrofolate and then the hydrolysis of 5,10-methenyltetrahydrofolate to 10-formyltetrahydrofolate. The protein is Bifunctional protein FolD 2 of Hydrogenovibrio crunogenus (strain DSM 25203 / XCL-2) (Thiomicrospira crunogena).